We begin with the raw amino-acid sequence, 878 residues long: NUT family member 2A (878 aa).

Disordered regions lie at residues 273–324 (WSQG…DDSC), 417–566 (QKSQ…LSYT), 627–757 (KEKQ…EEEE), and 775–878 (WLPQ…RCSQ). Composition is skewed to pro residues over residues 278 to 288 (PLPPPPPPAAQ) and 427 to 444 (CLPP…PPAP). The span at 476–487 (TKARRPPPRPHR) shows a compositional bias: basic residues. Residues 537-551 (EPEKQREEGEVKQPQ) are compositionally biased toward basic and acidic residues.

The protein belongs to the NUT family.

This Homo sapiens (Human) protein is NUT family member 2A (NUTM2A).